A 123-amino-acid polypeptide reads, in one-letter code: Small ribosomal subunit protein uS12 (123 aa).

Asp-89 is subject to 3-methylthioaspartic acid. Positions 104-123 are disordered; the sequence is TAGVKDRKQARSKYGAKRPK. The segment covering 113-123 has biased composition (basic residues); that stretch reads ARSKYGAKRPK.

The protein belongs to the universal ribosomal protein uS12 family. As to quaternary structure, part of the 30S ribosomal subunit. Contacts proteins S8 and S17. May interact with IF1 in the 30S initiation complex.

Its function is as follows. With S4 and S5 plays an important role in translational accuracy. Functionally, interacts with and stabilizes bases of the 16S rRNA that are involved in tRNA selection in the A site and with the mRNA backbone. Located at the interface of the 30S and 50S subunits, it traverses the body of the 30S subunit contacting proteins on the other side and probably holding the rRNA structure together. The combined cluster of proteins S8, S12 and S17 appears to hold together the shoulder and platform of the 30S subunit. In Chromobacterium violaceum (strain ATCC 12472 / DSM 30191 / JCM 1249 / CCUG 213 / NBRC 12614 / NCIMB 9131 / NCTC 9757 / MK), this protein is Small ribosomal subunit protein uS12.